We begin with the raw amino-acid sequence, 495 residues long: Polybrominated aromatic compounds synthase (495 aa).

Cysteine 437 lines the heme pocket.

The protein belongs to the cytochrome P450 family. Heme serves as cofactor.

Cytochrome P450 protein involved in the biosynthesis of polybrominated aromatic organic compounds. In the presence of ferredoxin, ferredoxin reductase and NADH, catalyzes the coupling of bromophenols and bromopyrroles, forming various polybrominated biphenyls and hydroxylated polybrominated diphenyl ethers (OH-BDE). Can also mediate the heterocoupling of 3,5-dibromocatechol, forming six different compounds, including polybrominated dibenzo-p-dioxins, which are among the most toxic molecules known to man. This is Polybrominated aromatic compounds synthase from Marinomonas mediterranea (strain ATCC 700492 / JCM 21426 / NBRC 103028 / MMB-1).